We begin with the raw amino-acid sequence, 264 residues long: Rano class II histocompatibility antigen, D-1 beta chain (264 aa).

A signal peptide spans 1 to 26; sequence MVWLARDSCVAAVILLLTVLSPPVAL. The interval 27 to 120 is beta-1; the sequence is VRDPTPRFLE…EISESFLVPR (94 aa). Residues 27–226 are Extracellular-facing; sequence VRDPTPRFLE…AQSTSAQNKK (200 aa). 2 disulfide bridges follow: Cys-42-Cys-106 and Cys-144-Cys-200. Asn-46 is a glycosylation site (N-linked (GlcNAc...) asparagine). A beta-2 region spans residues 121–215; the sequence is TVEPKVTVYP…SLPSPVRVEW (95 aa). An Ig-like C1-type domain is found at 124-228; that stretch reads PKVTVYPSKT…STSAQNKKMS (105 aa). The segment at 216–226 is connecting peptide; sequence KAQSTSAQNKK. A helical transmembrane segment spans residues 227-248; the sequence is MSGVGGIVLGLLFLGAGLFVYF. The Cytoplasmic segment spans residues 249-264; that stretch reads RNQKGQSGLQPTGLLN.

It belongs to the MHC class II family.

The protein localises to the membrane. In terms of biological role, involved in the presentation of foreign antigens to the immune system. This is Rano class II histocompatibility antigen, D-1 beta chain (RT1-Db1) from Rattus norvegicus (Rat).